The sequence spans 475 residues: Bifunctional protein HldE (475 aa).

Positions 1 to 318 (MKITLPEFEK…ANALYTEQET (318 aa)) are ribokinase. 195 to 198 (NMSE) contacts ATP. D264 is an active-site residue. Residues 344 to 475 (MTNGCFDILH…DIIKTIRERG (132 aa)) form a cytidylyltransferase region.

It in the N-terminal section; belongs to the carbohydrate kinase PfkB family. This sequence in the C-terminal section; belongs to the cytidylyltransferase family. In terms of assembly, homodimer.

The catalysed reaction is D-glycero-beta-D-manno-heptose 7-phosphate + ATP = D-glycero-beta-D-manno-heptose 1,7-bisphosphate + ADP + H(+). The enzyme catalyses D-glycero-beta-D-manno-heptose 1-phosphate + ATP + H(+) = ADP-D-glycero-beta-D-manno-heptose + diphosphate. Its pathway is nucleotide-sugar biosynthesis; ADP-L-glycero-beta-D-manno-heptose biosynthesis; ADP-L-glycero-beta-D-manno-heptose from D-glycero-beta-D-manno-heptose 7-phosphate: step 1/4. It functions in the pathway nucleotide-sugar biosynthesis; ADP-L-glycero-beta-D-manno-heptose biosynthesis; ADP-L-glycero-beta-D-manno-heptose from D-glycero-beta-D-manno-heptose 7-phosphate: step 3/4. Catalyzes the phosphorylation of D-glycero-D-manno-heptose 7-phosphate at the C-1 position to selectively form D-glycero-beta-D-manno-heptose-1,7-bisphosphate. Functionally, catalyzes the ADP transfer from ATP to D-glycero-beta-D-manno-heptose 1-phosphate, yielding ADP-D-glycero-beta-D-manno-heptose. The polypeptide is Bifunctional protein HldE (Aeromonas hydrophila subsp. hydrophila (strain ATCC 7966 / DSM 30187 / BCRC 13018 / CCUG 14551 / JCM 1027 / KCTC 2358 / NCIMB 9240 / NCTC 8049)).